A 711-amino-acid chain; its full sequence is Polyribonucleotide nucleotidyltransferase (711 aa).

D486 and D492 together coordinate Mg(2+). Residues P553–I612 form the KH domain. An S1 motif domain is found at G622 to K690. A disordered region spans residues I689 to E711. Positions E694–E711 are enriched in low complexity.

This sequence belongs to the polyribonucleotide nucleotidyltransferase family. In terms of assembly, component of the RNA degradosome, which is a multiprotein complex involved in RNA processing and mRNA degradation. Requires Mg(2+) as cofactor.

Its subcellular location is the cytoplasm. The enzyme catalyses RNA(n+1) + phosphate = RNA(n) + a ribonucleoside 5'-diphosphate. Involved in mRNA degradation. Catalyzes the phosphorolysis of single-stranded polyribonucleotides processively in the 3'- to 5'-direction. The protein is Polyribonucleotide nucleotidyltransferase of Escherichia coli O6:K15:H31 (strain 536 / UPEC).